The chain runs to 305 residues: Ornithine carbamoyltransferase, anabolic (305 aa).

Carbamoyl phosphate contacts are provided by residues 53–56 (STRT), Gln-80, Arg-104, and 131–134 (HPCQ). L-ornithine-binding positions include Asn-162, Asp-219, and 223–224 (SM). Carbamoyl phosphate-binding positions include 259 to 260 (CL) and Arg-287.

It belongs to the aspartate/ornithine carbamoyltransferase superfamily. OTCase family. In terms of assembly, homotrimer.

The protein resides in the cytoplasm. The enzyme catalyses carbamoyl phosphate + L-ornithine = L-citrulline + phosphate + H(+). The protein operates within amino-acid biosynthesis; L-arginine biosynthesis; L-arginine from L-ornithine and carbamoyl phosphate: step 1/3. Functionally, reversibly catalyzes the transfer of the carbamoyl group from carbamoyl phosphate (CP) to the N(epsilon) atom of ornithine (ORN) to produce L-citrulline, which is a substrate for argininosuccinate synthetase (ArgG) involved in the final step in arginine biosynthesis. This Pseudomonas aeruginosa (strain ATCC 15692 / DSM 22644 / CIP 104116 / JCM 14847 / LMG 12228 / 1C / PRS 101 / PAO1) protein is Ornithine carbamoyltransferase, anabolic.